A 626-amino-acid chain; its full sequence is Phosphomethylpyrimidine synthase (626 aa).

Substrate-binding positions include asparagine 237, methionine 266, tyrosine 295, histidine 331, 351–353 (SRG), 392–395 (DGLR), and glutamate 431. Position 435 (histidine 435) interacts with Zn(2+). Residue tyrosine 458 coordinates substrate. Zn(2+) is bound at residue histidine 499. Residues cysteine 579, cysteine 582, and cysteine 587 each contribute to the [4Fe-4S] cluster site.

This sequence belongs to the ThiC family. As to quaternary structure, homodimer. Requires [4Fe-4S] cluster as cofactor.

The enzyme catalyses 5-amino-1-(5-phospho-beta-D-ribosyl)imidazole + S-adenosyl-L-methionine = 4-amino-2-methyl-5-(phosphooxymethyl)pyrimidine + CO + 5'-deoxyadenosine + formate + L-methionine + 3 H(+). Its pathway is cofactor biosynthesis; thiamine diphosphate biosynthesis. Catalyzes the synthesis of the hydroxymethylpyrimidine phosphate (HMP-P) moiety of thiamine from aminoimidazole ribotide (AIR) in a radical S-adenosyl-L-methionine (SAM)-dependent reaction. This chain is Phosphomethylpyrimidine synthase, found in Cupriavidus pinatubonensis (strain JMP 134 / LMG 1197) (Cupriavidus necator (strain JMP 134)).